We begin with the raw amino-acid sequence, 110 residues long: Nucleotide-binding protein HI1146 homolog (110 aa).

Belongs to the RapZ-like family.

Its function is as follows. Displays ATPase and GTPase activities. This chain is Nucleotide-binding protein HI1146 homolog, found in Aggregatibacter actinomycetemcomitans (Actinobacillus actinomycetemcomitans).